The chain runs to 344 residues: Holliday junction branch migration complex subunit RuvB (344 aa).

Residues 1–25 (MTDSDPTLRPDRLPEDVQATDDRAL) show a composition bias toward basic and acidic residues. A disordered region spans residues 1–33 (MTDSDPTLRPDRLPEDVQATDDRALRPQSLDDF). The tract at residues 1–186 (MTDSDPTLRP…FGIPTRLNFY (186 aa)) is large ATPase domain (RuvB-L). ATP-binding positions include L25, R26, G67, K70, T71, T72, 133-135 (EDF), R176, Y186, and R223. T71 is a binding site for Mg(2+). The small ATPAse domain (RuvB-S) stretch occupies residues 187 to 257 (TIAELDQIVA…IADSALTRLG (71 aa)). A head domain (RuvB-H) region spans residues 260-344 (DLGLDGADRR…PKRPDQGELI (85 aa)). DNA contacts are provided by R296, R315, and R320.

The protein belongs to the RuvB family. In terms of assembly, homohexamer. Forms an RuvA(8)-RuvB(12)-Holliday junction (HJ) complex. HJ DNA is sandwiched between 2 RuvA tetramers; dsDNA enters through RuvA and exits via RuvB. An RuvB hexamer assembles on each DNA strand where it exits the tetramer. Each RuvB hexamer is contacted by two RuvA subunits (via domain III) on 2 adjacent RuvB subunits; this complex drives branch migration. In the full resolvosome a probable DNA-RuvA(4)-RuvB(12)-RuvC(2) complex forms which resolves the HJ.

Its subcellular location is the cytoplasm. The enzyme catalyses ATP + H2O = ADP + phosphate + H(+). In terms of biological role, the RuvA-RuvB-RuvC complex processes Holliday junction (HJ) DNA during genetic recombination and DNA repair, while the RuvA-RuvB complex plays an important role in the rescue of blocked DNA replication forks via replication fork reversal (RFR). RuvA specifically binds to HJ cruciform DNA, conferring on it an open structure. The RuvB hexamer acts as an ATP-dependent pump, pulling dsDNA into and through the RuvAB complex. RuvB forms 2 homohexamers on either side of HJ DNA bound by 1 or 2 RuvA tetramers; 4 subunits per hexamer contact DNA at a time. Coordinated motions by a converter formed by DNA-disengaged RuvB subunits stimulates ATP hydrolysis and nucleotide exchange. Immobilization of the converter enables RuvB to convert the ATP-contained energy into a lever motion, pulling 2 nucleotides of DNA out of the RuvA tetramer per ATP hydrolyzed, thus driving DNA branch migration. The RuvB motors rotate together with the DNA substrate, which together with the progressing nucleotide cycle form the mechanistic basis for DNA recombination by continuous HJ branch migration. Branch migration allows RuvC to scan DNA until it finds its consensus sequence, where it cleaves and resolves cruciform DNA. The chain is Holliday junction branch migration complex subunit RuvB from Jannaschia sp. (strain CCS1).